Reading from the N-terminus, the 355-residue chain is Alanine racemase (355 aa).

The active-site Proton acceptor; specific for D-alanine is the Lys-34. Position 34 is an N6-(pyridoxal phosphate)lysine (Lys-34). Arg-133 serves as a coordination point for substrate. Catalysis depends on Tyr-249, which acts as the Proton acceptor; specific for L-alanine. Position 297 (Met-297) interacts with substrate.

The protein belongs to the alanine racemase family. Requires pyridoxal 5'-phosphate as cofactor.

It carries out the reaction L-alanine = D-alanine. It functions in the pathway amino-acid biosynthesis; D-alanine biosynthesis; D-alanine from L-alanine: step 1/1. Catalyzes the interconversion of L-alanine and D-alanine. May also act on other amino acids. This is Alanine racemase (alr) from Rickettsia conorii (strain ATCC VR-613 / Malish 7).